Reading from the N-terminus, the 528-residue chain is Serine/threonine-protein kinase akt-2 (528 aa).

A PH domain is found at 12–115 (DIVIESWLHK…WIEAIQAVSS (104 aa)). The interval 121–153 (ENAGNTSMQEEDTNGNPSGESDVNMDATSTRSD) is disordered. Residues 123–153 (AGNTSMQEEDTNGNPSGESDVNMDATSTRSD) are compositionally biased toward polar residues. The Protein kinase domain maps to 180–437 (FDFLKVLGQG…AREVSRAEFF (258 aa)). Residues 186 to 194 (LGQGTFGKV) and K209 contribute to the ATP site. D303 (proton acceptor) is an active-site residue. In terms of domain architecture, AGC-kinase C-terminal spans 438–515 (KDVDWEATLR…YYVSGSLERS (78 aa)).

It belongs to the protein kinase superfamily. AGC Ser/Thr protein kinase family. RAC subfamily. Interacts with pdk-1, sgk-1, akt-1 and daf-16. Part of a complex containing sgk-1, akt-1 and akt-2. Mg(2+) is required as a cofactor. In terms of tissue distribution, expressed in neurons, muscle cells of the pharynx, rectal gland cells, and spermatheca.

The enzyme catalyses L-seryl-[protein] + ATP = O-phospho-L-seryl-[protein] + ADP + H(+). It catalyses the reaction L-threonyl-[protein] + ATP = O-phospho-L-threonyl-[protein] + ADP + H(+). Phosphorylated and activated by pdk-1. Acts downstream of PI3 kinase age-1 and kinase pdk-1 in the daf-2/insulin receptor-like transduction pathway. Essential role in regulating developmental arrest at the dauer stage. Phosphorylates Forkhead-related daf-16 and the longevity-promoting skn-1 transcription factors, which inhibits their entry into the nucleus and antagonizes their functions. Role in immune function and pathogen resistance. Downstream of age-1 and together with akt-1 and sgk-1, promotes cell survival during embryonic development. Plays a role in maintaining the gonadal basement membrane through antagonizing akt-1 activity. The polypeptide is Serine/threonine-protein kinase akt-2 (Caenorhabditis elegans).